The primary structure comprises 464 residues: Sugar transporter ERD6-like 1 (464 aa).

12 consecutive transmembrane segments (helical) span residues 23 to 43, 72 to 92, 95 to 115, 125 to 145, 156 to 176, 180 to 200, 263 to 283, 298 to 318, 326 to 346, 359 to 379, 399 to 419, and 424 to 444; these read ITCGLLLSTSVAVTGSFVYGC, VMTLGGMITAAFSGKIAAVIG, QTMWIADVFCIFGWLAVAFAH, GFLGFGVGLISYVVPVYIAEI, FSNQLLQSFGISLMFFTGNFF, TLALLSAIPCGIQMICLFFIP, LIIGLGLMLLQQFCGSSAISA, IGTSILAVILVPQSIIVMFAV, LLMSSSIGLCICSFLIGLSYY, PILIVGLVGYVLSFGIGLGGL, LVTVSNWFFSWIIIFSFNFMM, and FGTYFIFAGVSLMSFVFVWTL.

This sequence belongs to the major facilitator superfamily. Sugar transporter (TC 2.A.1.1) family.

The protein resides in the membrane. Functionally, sugar transporter. This chain is Sugar transporter ERD6-like 1 (SUGTL4), found in Arabidopsis thaliana (Mouse-ear cress).